We begin with the raw amino-acid sequence, 154 residues long: 6,7-dimethyl-8-ribityllumazine synthase (154 aa).

5-amino-6-(D-ribitylamino)uracil-binding positions include Phe-22, 56-58 (AFE), and 80-82 (AVI). 85–86 (AT) is a (2S)-2-hydroxy-3-oxobutyl phosphate binding site. His-88 acts as the Proton donor in catalysis. Residue Phe-113 participates in 5-amino-6-(D-ribitylamino)uracil binding. Arg-127 provides a ligand contact to (2S)-2-hydroxy-3-oxobutyl phosphate.

This sequence belongs to the DMRL synthase family.

The enzyme catalyses (2S)-2-hydroxy-3-oxobutyl phosphate + 5-amino-6-(D-ribitylamino)uracil = 6,7-dimethyl-8-(1-D-ribityl)lumazine + phosphate + 2 H2O + H(+). The protein operates within cofactor biosynthesis; riboflavin biosynthesis; riboflavin from 2-hydroxy-3-oxobutyl phosphate and 5-amino-6-(D-ribitylamino)uracil: step 1/2. Functionally, catalyzes the formation of 6,7-dimethyl-8-ribityllumazine by condensation of 5-amino-6-(D-ribitylamino)uracil with 3,4-dihydroxy-2-butanone 4-phosphate. This is the penultimate step in the biosynthesis of riboflavin. The polypeptide is 6,7-dimethyl-8-ribityllumazine synthase (Desulfitobacterium hafniense (strain DSM 10664 / DCB-2)).